The primary structure comprises 185 residues: dCTP deaminase (185 aa).

Residues Lys107 to Arg112, Thr131 to Glu133, Gln152, Tyr166, and Gln176 each bind dCTP. Glu133 serves as the catalytic Proton donor/acceptor.

It belongs to the dCTP deaminase family. Homotrimer.

The catalysed reaction is dCTP + H2O + H(+) = dUTP + NH4(+). Its pathway is pyrimidine metabolism; dUMP biosynthesis; dUMP from dCTP (dUTP route): step 1/2. In terms of biological role, catalyzes the deamination of dCTP to dUTP. The polypeptide is dCTP deaminase (Wolbachia sp. subsp. Brugia malayi (strain TRS)).